A 66-amino-acid chain; its full sequence is U10-theraphotoxin-Cg1a 2 (66 aa).

The N-terminal stretch at Met-1–Ala-21 is a signal peptide. Positions Ala-22–Arg-29 are excised as a propeptide. Disulfide bonds link Cys-31-Cys-46, Cys-38-Cys-51, and Cys-45-Cys-58.

This sequence belongs to the neurotoxin 10 (Hwtx-1) family. 29 (Jztx-13) subfamily. Expressed by the venom gland.

It is found in the secreted. Probable ion channel inhibitor. This Chilobrachys guangxiensis (Chinese earth tiger tarantula) protein is U10-theraphotoxin-Cg1a 2.